Consider the following 369-residue polypeptide: Peptide chain release factor 2 (369 aa).

Residue Gln-250 is modified to N5-methylglutamine.

This sequence belongs to the prokaryotic/mitochondrial release factor family. Post-translationally, methylated by PrmC. Methylation increases the termination efficiency of RF2.

It is found in the cytoplasm. Functionally, peptide chain release factor 2 directs the termination of translation in response to the peptide chain termination codons UGA and UAA. The sequence is that of Peptide chain release factor 2 (prfB) from Rickettsia prowazekii (strain Madrid E).